The following is a 135-amino-acid chain: D-ribose pyranase (135 aa).

Residue histidine 20 is the Proton donor of the active site. Residues aspartate 28, histidine 102, and 124 to 126 (YSN) contribute to the substrate site.

The protein belongs to the RbsD / FucU family. RbsD subfamily. As to quaternary structure, homodecamer.

The protein localises to the cytoplasm. It catalyses the reaction beta-D-ribopyranose = beta-D-ribofuranose. It functions in the pathway carbohydrate metabolism; D-ribose degradation; D-ribose 5-phosphate from beta-D-ribopyranose: step 1/2. Catalyzes the interconversion of beta-pyran and beta-furan forms of D-ribose. The sequence is that of D-ribose pyranase from Thermotoga petrophila (strain ATCC BAA-488 / DSM 13995 / JCM 10881 / RKU-1).